The chain runs to 108 residues: UPF0060 membrane protein Mflv_3127 (108 aa).

Helical transmembrane passes span 7 to 27 (LLFV…WQGF), 32 to 52 (GWLW…VAAF), 61 to 81 (VLAA…MVAD), and 87 to 107 (RWDI…MYAP).

This sequence belongs to the UPF0060 family.

Its subcellular location is the cell membrane. The chain is UPF0060 membrane protein Mflv_3127 from Mycolicibacterium gilvum (strain PYR-GCK) (Mycobacterium gilvum (strain PYR-GCK)).